The sequence spans 84 residues: RNA-binding protein Hfq (84 aa).

Positions Asp10–Ile69 constitute a Sm domain.

It belongs to the Hfq family. As to quaternary structure, homohexamer.

Functionally, RNA chaperone that binds small regulatory RNA (sRNAs) and mRNAs to facilitate mRNA translational regulation in response to envelope stress, environmental stress and changes in metabolite concentrations. Also binds with high specificity to tRNAs. This is RNA-binding protein Hfq from Nitrosomonas europaea (strain ATCC 19718 / CIP 103999 / KCTC 2705 / NBRC 14298).